The following is a 263-amino-acid chain: Auxin-responsive protein IAA3 (263 aa).

Disordered regions lie at residues 1 to 54 (MSPP…RRPA) and 76 to 121 (RVFP…PAAK). Residues 28–38 (RADDVDLKGTE) are compositionally biased toward basic and acidic residues. The EAR-like (transcriptional repression) signature appears at 39–43 (LRLGL). A PB1 domain is found at 158–245 (FLYVKVSMDG…SCRRLRIMKG (88 aa)).

The protein belongs to the Aux/IAA family. In terms of assembly, homodimers and heterodimers. As to expression, highly expressed in flowers. Expressed in roots and shoots.

It is found in the nucleus. In terms of biological role, aux/IAA proteins are short-lived transcriptional factors that function as repressors of early auxin response genes at low auxin concentrations. This chain is Auxin-responsive protein IAA3 (IAA3), found in Oryza sativa subsp. japonica (Rice).